The chain runs to 97 residues: YcgL domain-containing protein PFLU_1517 (97 aa).

Residues 3–87 form the YcgL domain; sequence RICSIYRSKK…AEDEYIEHLP (85 aa).

The polypeptide is YcgL domain-containing protein PFLU_1517 (Pseudomonas fluorescens (strain SBW25)).